Here is a 473-residue protein sequence, read N- to C-terminus: Adenosylhomocysteinase (473 aa).

3 residues coordinate substrate: Thr-64, Asp-139, and Glu-199. An NAD(+)-binding site is contributed by Thr-200–Thr-202. Residues Lys-229 and Asp-233 each contribute to the substrate site. Residues Asn-234, Gly-263–Gly-268, Glu-286, Asn-321, Ile-342–His-344, and Asn-387 each bind NAD(+).

This sequence belongs to the adenosylhomocysteinase family. NAD(+) serves as cofactor.

It is found in the cytoplasm. It carries out the reaction S-adenosyl-L-homocysteine + H2O = L-homocysteine + adenosine. Its pathway is amino-acid biosynthesis; L-homocysteine biosynthesis; L-homocysteine from S-adenosyl-L-homocysteine: step 1/1. Functionally, may play a key role in the regulation of the intracellular concentration of adenosylhomocysteine. This is Adenosylhomocysteinase from Paraburkholderia phytofirmans (strain DSM 17436 / LMG 22146 / PsJN) (Burkholderia phytofirmans).